Consider the following 445-residue polypeptide: Histidinol dehydrogenase (445 aa).

Residues Tyr-138, Gln-199, and Asn-222 each contribute to the NAD(+) site. The substrate site is built by Ser-245, Gln-267, and His-270. Positions 267 and 270 each coordinate Zn(2+). Catalysis depends on proton acceptor residues Glu-335 and His-336. Substrate-binding residues include His-336, Asp-369, Glu-423, and His-428. Position 369 (Asp-369) interacts with Zn(2+). His-428 contacts Zn(2+).

It belongs to the histidinol dehydrogenase family. Requires Zn(2+) as cofactor.

It catalyses the reaction L-histidinol + 2 NAD(+) + H2O = L-histidine + 2 NADH + 3 H(+). It participates in amino-acid biosynthesis; L-histidine biosynthesis; L-histidine from 5-phospho-alpha-D-ribose 1-diphosphate: step 9/9. Its function is as follows. Catalyzes the sequential NAD-dependent oxidations of L-histidinol to L-histidinaldehyde and then to L-histidine. This Burkholderia mallei (strain ATCC 23344) protein is Histidinol dehydrogenase.